The chain runs to 307 residues: 4-hydroxythreonine-4-phosphate dehydrogenase (307 aa).

Substrate contacts are provided by H126 and T127. A divalent metal cation is bound by residues H156, H195, and H251. Substrate-binding residues include K259, N268, and R277.

The protein belongs to the PdxA family. Homodimer. It depends on Zn(2+) as a cofactor. The cofactor is Mg(2+). Requires Co(2+) as cofactor.

The protein localises to the cytoplasm. It carries out the reaction 4-(phosphooxy)-L-threonine + NAD(+) = 3-amino-2-oxopropyl phosphate + CO2 + NADH. It functions in the pathway cofactor biosynthesis; pyridoxine 5'-phosphate biosynthesis; pyridoxine 5'-phosphate from D-erythrose 4-phosphate: step 4/5. Functionally, catalyzes the NAD(P)-dependent oxidation of 4-(phosphooxy)-L-threonine (HTP) into 2-amino-3-oxo-4-(phosphooxy)butyric acid which spontaneously decarboxylates to form 3-amino-2-oxopropyl phosphate (AHAP). The sequence is that of 4-hydroxythreonine-4-phosphate dehydrogenase from Helicobacter pylori (strain G27).